A 350-amino-acid chain; its full sequence is Methylthioribose-1-phosphate isomerase (350 aa).

Substrate contacts are provided by residues 47 to 49 (RGA), Arg-90, and Gln-197. Catalysis depends on Asp-238, which acts as the Proton donor. 248 to 249 (NK) is a binding site for substrate.

Belongs to the eIF-2B alpha/beta/delta subunits family. MtnA subfamily.

The enzyme catalyses 5-(methylsulfanyl)-alpha-D-ribose 1-phosphate = 5-(methylsulfanyl)-D-ribulose 1-phosphate. Its pathway is amino-acid biosynthesis; L-methionine biosynthesis via salvage pathway; L-methionine from S-methyl-5-thio-alpha-D-ribose 1-phosphate: step 1/6. In terms of biological role, catalyzes the interconversion of methylthioribose-1-phosphate (MTR-1-P) into methylthioribulose-1-phosphate (MTRu-1-P). The sequence is that of Methylthioribose-1-phosphate isomerase from Nitratidesulfovibrio vulgaris (strain DP4) (Desulfovibrio vulgaris).